The following is a 497-amino-acid chain: Probable small intestine urate exporter (497 aa).

5 N-linked (GlcNAc...) asparagine glycosylation sites follow: Asn47, Asn56, Asn66, Asn75, and Asn90. The next 10 helical transmembrane spans lie at 149 to 169 (SFLTLFIPLAANAGVALLIVL), 171 to 191 (IVQGIAQVMVLTGQYSIWVKW), 203 to 223 (IAGSGSMLGSFIVLLAGGLLC), 230 to 250 (YVFYIFGGIGCACCPLWFPLI), 292 to 312 (LPLWAILVSYFCEYWLFYTIM), 332 to 352 (ILSALPFVVGCICIILGGLLA), 368 to 388 (KLFTAIGVLFPSVILVSLPWV), 398 to 418 (FLVLSSAISSFCESGALVNFL), 431 to 451 (LLQVFAHIAGAISPTAAGFFI), and 461 to 481 (NVFLLSAAVNISGLVFYLIFG).

The protein belongs to the major facilitator superfamily. Sodium/anion cotransporter family. In terms of tissue distribution, abundantly expressed in pancreas, liver, colon and small intestine, less in kidney. Not detected in the adrenal glands, brain, placenta, heart, testis, skeletal muscle, and lungs.

The protein localises to the apical cell membrane. The enzyme catalyses 3 Na(+)(out) + phosphate(out) = 3 Na(+)(in) + phosphate(in). It catalyses the reaction urate(out) + n chloride(in) = urate(in) + n chloride(out). The catalysed reaction is L-thyroxine(out) = L-thyroxine(in). It carries out the reaction 3,3',5-triiodo-L-thyronine(out) = 3,3',5-triiodo-L-thyronine(in). Functionally, acts as a membrane potential-dependent organic anion transporter, the transport requires a low concentration of chloride ions. Mediates chloride-dependent transport of urate. Mediates sodium-independent high affinity transport of thyroid hormones including L-thyroxine (T4) and 3,3',5-triiodo-L-thyronine (T3). Can actively transport inorganic phosphate into cells via Na(+) cotransport. The polypeptide is Probable small intestine urate exporter (SLC17A4) (Homo sapiens (Human)).